A 245-amino-acid chain; its full sequence is Small ribosomal subunit protein uS2 (245 aa).

Belongs to the universal ribosomal protein uS2 family.

In Pseudomonas fluorescens (strain ATCC BAA-477 / NRRL B-23932 / Pf-5), this protein is Small ribosomal subunit protein uS2.